Reading from the N-terminus, the 397-residue chain is Probable tRNA sulfurtransferase (397 aa).

The THUMP domain maps to 60-165; sequence HPVIEKLQEV…KEGTYITAYD (106 aa). Residues 183–184, 208–209, arginine 265, glycine 287, and glutamine 296 each bind ATP; these read ML and HF.

It belongs to the ThiI family.

The protein resides in the cytoplasm. The enzyme catalyses [ThiI sulfur-carrier protein]-S-sulfanyl-L-cysteine + a uridine in tRNA + 2 reduced [2Fe-2S]-[ferredoxin] + ATP + H(+) = [ThiI sulfur-carrier protein]-L-cysteine + a 4-thiouridine in tRNA + 2 oxidized [2Fe-2S]-[ferredoxin] + AMP + diphosphate. The catalysed reaction is [ThiS sulfur-carrier protein]-C-terminal Gly-Gly-AMP + S-sulfanyl-L-cysteinyl-[cysteine desulfurase] + AH2 = [ThiS sulfur-carrier protein]-C-terminal-Gly-aminoethanethioate + L-cysteinyl-[cysteine desulfurase] + A + AMP + 2 H(+). It functions in the pathway cofactor biosynthesis; thiamine diphosphate biosynthesis. Catalyzes the ATP-dependent transfer of a sulfur to tRNA to produce 4-thiouridine in position 8 of tRNAs, which functions as a near-UV photosensor. Also catalyzes the transfer of sulfur to the sulfur carrier protein ThiS, forming ThiS-thiocarboxylate. This is a step in the synthesis of thiazole, in the thiamine biosynthesis pathway. The sulfur is donated as persulfide by IscS. This is Probable tRNA sulfurtransferase from Anoxybacillus flavithermus (strain DSM 21510 / WK1).